A 391-amino-acid polypeptide reads, in one-letter code: Ferrochelatase (391 aa).

The Fe cation site is built by His196 and Glu281.

This sequence belongs to the ferrochelatase family.

The protein localises to the cytoplasm. It carries out the reaction heme b + 2 H(+) = protoporphyrin IX + Fe(2+). The protein operates within porphyrin-containing compound metabolism; protoheme biosynthesis; protoheme from protoporphyrin-IX: step 1/1. In terms of biological role, catalyzes the ferrous insertion into protoporphyrin IX. The protein is Ferrochelatase of Prochlorococcus marinus (strain AS9601).